The sequence spans 316 residues: tRNA dimethylallyltransferase (316 aa).

Gly17–Thr24 lines the ATP pocket. Residue Thr19–Thr24 coordinates substrate. Interaction with substrate tRNA stretches follow at residues Asp42–Leu45, Gln166–Arg170, Arg247–Arg252, and Lys280–Arg287.

This sequence belongs to the IPP transferase family. Monomer. Mg(2+) is required as a cofactor.

The enzyme catalyses adenosine(37) in tRNA + dimethylallyl diphosphate = N(6)-dimethylallyladenosine(37) in tRNA + diphosphate. In terms of biological role, catalyzes the transfer of a dimethylallyl group onto the adenine at position 37 in tRNAs that read codons beginning with uridine, leading to the formation of N6-(dimethylallyl)adenosine (i(6)A). This is tRNA dimethylallyltransferase from Escherichia coli O81 (strain ED1a).